A 335-amino-acid chain; its full sequence is Nucleoid-associated protein KPN78578_25800 (335 aa).

This sequence belongs to the YejK family.

It is found in the cytoplasm. The protein resides in the nucleoid. The sequence is that of Nucleoid-associated protein KPN78578_25800 from Klebsiella pneumoniae subsp. pneumoniae (strain ATCC 700721 / MGH 78578).